We begin with the raw amino-acid sequence, 266 residues long: Translation initiation factor 2 subunit alpha (266 aa).

Positions 12 to 83 (GEILIATVKQ…RKGTVDVSLK (72 aa)) constitute an S1 motif domain.

Belongs to the eIF-2-alpha family. Heterotrimer composed of an alpha, a beta and a gamma chain.

In terms of biological role, eIF-2 functions in the early steps of protein synthesis by forming a ternary complex with GTP and initiator tRNA. In Saccharolobus islandicus (strain M.16.27) (Sulfolobus islandicus), this protein is Translation initiation factor 2 subunit alpha.